Consider the following 465-residue polypeptide: Fumarate hydratase class II (465 aa).

Residues 99–101, R127, 130–133, 140–142, and T188 contribute to the substrate site; these read SGT, HPND, and STN. H189 acts as the Proton donor/acceptor in catalysis. The active site involves S319. Substrate contacts are provided by residues S320 and 325–327; that span reads KVN.

This sequence belongs to the class-II fumarase/aspartase family. Fumarase subfamily. As to quaternary structure, homotetramer.

The protein resides in the cytoplasm. It carries out the reaction (S)-malate = fumarate + H2O. It participates in carbohydrate metabolism; tricarboxylic acid cycle; (S)-malate from fumarate: step 1/1. In terms of biological role, involved in the TCA cycle. Catalyzes the stereospecific interconversion of fumarate to L-malate. The chain is Fumarate hydratase class II from Parasynechococcus marenigrum (strain WH8102).